Consider the following 343-residue polypeptide: S-adenosylmethionine:tRNA ribosyltransferase-isomerase (343 aa).

This sequence belongs to the QueA family. Monomer.

It localises to the cytoplasm. It carries out the reaction 7-aminomethyl-7-carbaguanosine(34) in tRNA + S-adenosyl-L-methionine = epoxyqueuosine(34) in tRNA + adenine + L-methionine + 2 H(+). It participates in tRNA modification; tRNA-queuosine biosynthesis. Its function is as follows. Transfers and isomerizes the ribose moiety from AdoMet to the 7-aminomethyl group of 7-deazaguanine (preQ1-tRNA) to give epoxyqueuosine (oQ-tRNA). This Dehalococcoides mccartyi (strain CBDB1) protein is S-adenosylmethionine:tRNA ribosyltransferase-isomerase.